The primary structure comprises 721 residues: Ribosomal RNA large subunit methyltransferase K/L (721 aa).

The region spanning 56–167 is the THUMP domain; the sequence is GMYKACLWSR…REVVTVSIDL (112 aa).

Belongs to the methyltransferase superfamily. RlmKL family.

Its subcellular location is the cytoplasm. It carries out the reaction guanosine(2445) in 23S rRNA + S-adenosyl-L-methionine = N(2)-methylguanosine(2445) in 23S rRNA + S-adenosyl-L-homocysteine + H(+). It catalyses the reaction guanosine(2069) in 23S rRNA + S-adenosyl-L-methionine = N(2)-methylguanosine(2069) in 23S rRNA + S-adenosyl-L-homocysteine + H(+). Functionally, specifically methylates the guanine in position 2445 (m2G2445) and the guanine in position 2069 (m7G2069) of 23S rRNA. In Marinomonas sp. (strain MWYL1), this protein is Ribosomal RNA large subunit methyltransferase K/L.